The chain runs to 428 residues: Gamma-glutamyl phosphate reductase (428 aa).

This sequence belongs to the gamma-glutamyl phosphate reductase family.

The protein localises to the cytoplasm. The enzyme catalyses L-glutamate 5-semialdehyde + phosphate + NADP(+) = L-glutamyl 5-phosphate + NADPH + H(+). It functions in the pathway amino-acid biosynthesis; L-proline biosynthesis; L-glutamate 5-semialdehyde from L-glutamate: step 2/2. Catalyzes the NADPH-dependent reduction of L-glutamate 5-phosphate into L-glutamate 5-semialdehyde and phosphate. The product spontaneously undergoes cyclization to form 1-pyrroline-5-carboxylate. The protein is Gamma-glutamyl phosphate reductase of Anaeromyxobacter sp. (strain Fw109-5).